Consider the following 907-residue polypeptide: Chloride channel protein 2 (907 aa).

Residues 1 to 93 lie on the Cytoplasmic side of the membrane; the sequence is MAAATAAAAT…RCHKFLVSRV (93 aa). The tract at residues 22 to 40 is essential for channel gating by both voltage and cell volume; that stretch reads QYEQTLMYGRYTQELGAFA. Thr-26 is subject to Phosphothreonine. Residues 42–55 form a modulates channel gating by both voltage and cell volume region; it reads EEAARIRLGGPEPW. 2 consecutive transmembrane segments (helical) span residues 94 to 127 and 136 to 161; these read GEDW…AQQW and ILLQ…TQIL. The short motif at 167 to 171 is the Selectivity filter part_1 element; sequence GSGIP. An intramembrane region (helical) is located at residues 170–177; that stretch reads IPEMKTIL. 2 helical membrane-spanning segments follow: residues 186 to 204 and 211 to 229; these read LTLK…ALGS and EGPF…SKFL. The short motif at 209–213 is the Selectivity filter part_2 element; sequence GKEGP. 2 intramembrane regions (helical) span residues 245–257 and 261–269; these read MLAA…VGCC and PIGGVLFSI. Helical transmembrane passes span 281–301, 327–355, 364–383, 435–455, and 463–486; these read YWRG…LAVW, LPAF…VQVM, FLMK…ISTL, ANVF…SALA, and GAFM…MAAW. The Selectivity filter part_3 signature appears at 463–467; that stretch reads GAFMP. An intramembrane region (helical) is located at residues 503–517; that stretch reads GGYAVVGAAALAGAV. Residues 518-519 constitute an intramembrane region (note=Loop between two helices); it reads TH. The segment at residues 520–531 is an intramembrane region (helical); the sequence is TVSTAVIVFELT. Positions 532–536 form an intramembrane region, note=Loop between two helices; that stretch reads GQIAH. Residues 537-554 traverse the membrane as a helical segment; the sequence is ILPVMIAVILANAVAQSL. At 555-907 the chain is on the cytoplasmic side; that stretch reads QPSLYDSIIR…TPSDSDDKCQ (353 aa). The CBS 1 domain maps to 590 to 648; that stretch reads MVRDVPHVALSCTFRDLRLALHRTKGRMLALVESPESMILLGSIERSQVVALLGAQLSP. Basic residues predominate over residues 650-660; sequence RRRQHMQKLRK. The tract at residues 650 to 720 is disordered; the sequence is RRRQHMQKLR…NATSLQEGTT (71 aa). Residues 664–678 show a composition bias toward low complexity; sequence SPPSDQESPPSSETS. The segment covering 696–705 has biased composition (basic residues); it reads QTHKPLKPAL. The segment covering 710-720 has biased composition (polar residues); sequence SNATSLQEGTT. Ser-767 carries the post-translational modification Phosphoserine. The CBS 2 domain occupies 799–859; that stretch reads IDPAPFQLVE…GSVTAQGVKV (61 aa). Residues 821–822 carry the Basolateral membrane sorting motif; the sequence is LL. The tract at residues 865–907 is disordered; sequence SFRDSATSSSDTETTEVHALWGPRSRHGLPREGTPSDSDDKCQ.

This sequence belongs to the chloride channel (TC 2.A.49) family. ClC-2/CLCN2 subfamily. Homodimer. Interacts with auxiliary subunit HEPACAM. Phosphorylated. Activated by dephosphorylation. In terms of tissue distribution, ubiquitously expressed. Expressed in neurons and glial cells (at protein level).

It localises to the cell membrane. The protein resides in the basolateral cell membrane. Its subcellular location is the cell projection. The protein localises to the dendritic spine membrane. It is found in the axon. The catalysed reaction is chloride(in) = chloride(out). It carries out the reaction thiocyanate(in) = thiocyanate(out). The enzyme catalyses bromide(in) = bromide(out). It catalyses the reaction nitrate(in) = nitrate(out). The catalysed reaction is iodide(out) = iodide(in). Its activity is regulated as follows. Common gate kinetics are down-regulated by intracellular ATP. Inhibited by AK-42, a derivative of meclofenamate. Inhibited by Cd(2+). Inhibited by Zn(2+) and PKC activation. Inhibited at acidic pH. CCLN2:HEPACAM channel conductance is up-regulated upon hypo-osmolarity. Voltage-gated and osmosensitive chloride channel. Forms a homodimeric channel where each subunit has its own ion conduction pathway. Conducts double-barreled currents controlled by two types of gates, two fast glutamate gates that control each subunit independently and a slow common gate that opens and shuts off both subunits simultaneously. Displays inward rectification currents activated upon membrane hyperpolarization and extracellular hypotonicity. Contributes to chloride conductance involved in neuron excitability. In hippocampal neurons, generates a significant part of resting membrane conductance and provides an additional chloride efflux pathway to prevent chloride accumulation in dendrites upon GABA receptor activation. In glia, associates with the auxiliary subunit HEPACAM/GlialCAM at astrocytic processes and myelinated fiber tracts where it may regulate transcellular chloride flux buffering extracellular chloride and potassium concentrations. Regulates aldosterone production in adrenal glands. The opening of CLCN2 channels at hyperpolarized membrane potentials in the glomerulosa causes cell membrane depolarization, activation of voltage-gated calcium channels and increased expression of aldosterone synthase, the rate-limiting enzyme for aldosterone biosynthesis. Contributes to chloride conductance in retinal pigment epithelium involved in phagocytosis of shed photoreceptor outer segments and photoreceptor renewal. Conducts chloride currents at the basolateral membrane of epithelial cells with a role in chloride reabsorption rather than secretion. Permeable to small monovalent anions with chloride &gt; thiocyanate &gt; bromide &gt; nitrate &gt; iodide ion selectivity. This Rattus norvegicus (Rat) protein is Chloride channel protein 2 (Clcn2).